The following is a 359-amino-acid chain: N-acetyl-gamma-glutamyl-phosphate reductase (359 aa).

Residue Cys-162 is part of the active site.

Belongs to the NAGSA dehydrogenase family. Type 1 subfamily.

It is found in the cytoplasm. It catalyses the reaction N-acetyl-L-glutamate 5-semialdehyde + phosphate + NADP(+) = N-acetyl-L-glutamyl 5-phosphate + NADPH + H(+). It participates in amino-acid biosynthesis; L-arginine biosynthesis; N(2)-acetyl-L-ornithine from L-glutamate: step 3/4. In terms of biological role, catalyzes the NADPH-dependent reduction of N-acetyl-5-glutamyl phosphate to yield N-acetyl-L-glutamate 5-semialdehyde. This Prochlorococcus marinus (strain MIT 9211) protein is N-acetyl-gamma-glutamyl-phosphate reductase.